Here is a 401-residue protein sequence, read N- to C-terminus: MTALSKSKEIIDQTSHYGANNYHPLPIVISEALGAWVKDPEGNEYMDMLSAYSAVNQGHRHPKIIQALKDQADKITLTSRAFHNDQLGPFYEKTAKLTGKEMILPMNTGAEAVESAVKAARRWAYEVKGVADNQAEIIACVGNFHGRTMLAVSLSSEEEYKRGFGPMLPGIKLIPYGDVEALRQAITPNTAAFLFEPIQGEAGIVIPPEGFLQEAAAICKEENVLFIADEIQTGLGRTGKTFACDWDGIVPDMYILGKALGGGVFPISCIAADREILGVFNPGSHGSTFGGNPLACAVSIASLEVLEDEKLADRSLELGEYFKSELESIDSPVIKEVRGRGLFIGVELTEAARPYCERLKEEGLLCKETHDTVIRFAPPLIISKEDLDWAIEKIKHVLRNA.

Residue K258 is modified to N6-(pyridoxal phosphate)lysine.

This sequence belongs to the class-III pyridoxal-phosphate-dependent aminotransferase family. OAT subfamily. Requires pyridoxal 5'-phosphate as cofactor.

Its subcellular location is the cytoplasm. The enzyme catalyses a 2-oxocarboxylate + L-ornithine = L-glutamate 5-semialdehyde + an L-alpha-amino acid. The protein operates within amino-acid biosynthesis; L-proline biosynthesis; L-glutamate 5-semialdehyde from L-ornithine: step 1/1. In terms of biological role, catalyzes the interconversion of ornithine to glutamate semialdehyde. The sequence is that of Ornithine aminotransferase from Bacillus subtilis (strain 168).